The primary structure comprises 321 residues: MLNNEYKNSSLKIFSLKGNEALAQEVADQVGIELGKCSVKRFSDGEIQINIEESIRGCDVFIIQPTSYPVNLHLMELLIMIDACKRASAATINIVVPYYGYARQDRKARSREPITAKLVANLIETAGATRMIALDLHAPQIQGFFDIPIDHLMGVPILAKHFKDDPNINPEECVVVSPDHGGVTRARKLADILKTPIAIIDKRRPRPNVAEVMNIVGEIEGRTAIIIDDIIDTAGTITLAAQALKDKGAKEVYACCTHPVLSGPAKERIENSAIKELIVTNSIHLDEDRKPSNTKELSVAGLIAQAIIRVYERESVSVLFD.

ATP contacts are provided by residues 44–46 (DGE) and 103–104 (RQ). Mg(2+)-binding residues include histidine 137 and aspartate 179. Lysine 202 is an active-site residue. Residues arginine 204, aspartate 228, and 232–236 (DTAGT) each bind D-ribose 5-phosphate.

The protein belongs to the ribose-phosphate pyrophosphokinase family. Class I subfamily. As to quaternary structure, homohexamer. Mg(2+) is required as a cofactor.

It localises to the cytoplasm. It carries out the reaction D-ribose 5-phosphate + ATP = 5-phospho-alpha-D-ribose 1-diphosphate + AMP + H(+). Its pathway is metabolic intermediate biosynthesis; 5-phospho-alpha-D-ribose 1-diphosphate biosynthesis; 5-phospho-alpha-D-ribose 1-diphosphate from D-ribose 5-phosphate (route I): step 1/1. Functionally, involved in the biosynthesis of the central metabolite phospho-alpha-D-ribosyl-1-pyrophosphate (PRPP) via the transfer of pyrophosphoryl group from ATP to 1-hydroxyl of ribose-5-phosphate (Rib-5-P). The chain is Ribose-phosphate pyrophosphokinase from Staphylococcus aureus (strain Mu50 / ATCC 700699).